Consider the following 1004-residue polypeptide: 2-oxoglutarate dehydrogenase E1 component (1004 aa).

Belongs to the alpha-ketoglutarate dehydrogenase family. In terms of assembly, homodimer. Part of the 2-oxoglutarate dehydrogenase (OGDH) complex composed of E1 (2-oxoglutarate dehydrogenase), E2 (dihydrolipoamide succinyltransferase) and E3 (dihydrolipoamide dehydrogenase); the complex contains multiple copies of the three enzymatic components (E1, E2 and E3). The cofactor is thiamine diphosphate.

The enzyme catalyses N(6)-[(R)-lipoyl]-L-lysyl-[protein] + 2-oxoglutarate + H(+) = N(6)-[(R)-S(8)-succinyldihydrolipoyl]-L-lysyl-[protein] + CO2. E1 component of the 2-oxoglutarate dehydrogenase (OGDH) complex which catalyzes the decarboxylation of 2-oxoglutarate, the first step in the conversion of 2-oxoglutarate to succinyl-CoA and CO(2). The polypeptide is 2-oxoglutarate dehydrogenase E1 component (Brucella suis (strain ATCC 23445 / NCTC 10510)).